The primary structure comprises 264 residues: Formamidopyrimidine-DNA glycosylase (264 aa).

P2 acts as the Schiff-base intermediate with DNA in catalysis. Residue E3 is the Proton donor of the active site. K58 (proton donor; for beta-elimination activity) is an active-site residue. 3 residues coordinate DNA: H89, R107, and R144. The segment at 229–263 (RVYQRTGEPCLNCKTPIRRVIVTQRSSHFCPHCQK) adopts an FPG-type zinc-finger fold. Catalysis depends on R253, which acts as the Proton donor; for delta-elimination activity.

The protein belongs to the FPG family. As to quaternary structure, monomer. It depends on Zn(2+) as a cofactor.

The enzyme catalyses Hydrolysis of DNA containing ring-opened 7-methylguanine residues, releasing 2,6-diamino-4-hydroxy-5-(N-methyl)formamidopyrimidine.. It carries out the reaction 2'-deoxyribonucleotide-(2'-deoxyribose 5'-phosphate)-2'-deoxyribonucleotide-DNA = a 3'-end 2'-deoxyribonucleotide-(2,3-dehydro-2,3-deoxyribose 5'-phosphate)-DNA + a 5'-end 5'-phospho-2'-deoxyribonucleoside-DNA + H(+). In terms of biological role, involved in base excision repair of DNA damaged by oxidation or by mutagenic agents. Acts as a DNA glycosylase that recognizes and removes damaged bases. Has a preference for oxidized purines, such as 7,8-dihydro-8-oxoguanine (8-oxoG). Has AP (apurinic/apyrimidinic) lyase activity and introduces nicks in the DNA strand. Cleaves the DNA backbone by beta-delta elimination to generate a single-strand break at the site of the removed base with both 3'- and 5'-phosphates. The polypeptide is Formamidopyrimidine-DNA glycosylase (Solibacter usitatus (strain Ellin6076)).